The primary structure comprises 627 residues: 1-deoxy-D-xylulose-5-phosphate synthase (627 aa).

Residues His74 and 115–117 (GHA) each bind thiamine diphosphate. Residue Asp146 participates in Mg(2+) binding. Residues 147 to 148 (AA), Asn175, Phe284, and Glu364 each bind thiamine diphosphate. Residue Asn175 coordinates Mg(2+).

It belongs to the transketolase family. DXPS subfamily. As to quaternary structure, homodimer. It depends on Mg(2+) as a cofactor. The cofactor is thiamine diphosphate.

The enzyme catalyses D-glyceraldehyde 3-phosphate + pyruvate + H(+) = 1-deoxy-D-xylulose 5-phosphate + CO2. The protein operates within metabolic intermediate biosynthesis; 1-deoxy-D-xylulose 5-phosphate biosynthesis; 1-deoxy-D-xylulose 5-phosphate from D-glyceraldehyde 3-phosphate and pyruvate: step 1/1. Functionally, catalyzes the acyloin condensation reaction between C atoms 2 and 3 of pyruvate and glyceraldehyde 3-phosphate to yield 1-deoxy-D-xylulose-5-phosphate (DXP). This Acidobacterium capsulatum (strain ATCC 51196 / DSM 11244 / BCRC 80197 / JCM 7670 / NBRC 15755 / NCIMB 13165 / 161) protein is 1-deoxy-D-xylulose-5-phosphate synthase.